We begin with the raw amino-acid sequence, 154 residues long: Protein LOL1 (154 aa).

3 putative zinc finger regions span residues 34-64 (QLVCSGCRNLLMYPVGATSVCCAVCNAVTAV), 73-103 (QLVCGGCHTLLMYIRGATSVQCSCCHTVNLA), and 111-141 (HVNCGNCMMLLMYQYGARSVKCAVCNFVTSV).

It localises to the nucleus. Its function is as follows. Positive regulator of reactive oxygen-induced cell death. May be involved in the repression of the copper/zinc superoxide dismutase CSD1 and CSD2 that detoxify accumulating superoxide before the reactive oxygen species (ROS) can trigger a cell death cascade. LSD1 and LOL1 have antagonistic effects on CSD1 and CSD2 accumulation to regulate oxidative stress-induced cell death. This chain is Protein LOL1 (LOL1), found in Arabidopsis thaliana (Mouse-ear cress).